The chain runs to 37 residues: Potassium channel toxin alpha-KTx 1.13 (37 aa).

Position 1 is a pyrrolidone carboxylic acid (Gln1). 3 cysteine pairs are disulfide-bonded: Cys7/Cys28, Cys13/Cys33, and Cys17/Cys35. Positions 26-33 (GKCMNKKC) are interaction with Ca(2+)-activated K(+) channels.

This sequence belongs to the short scorpion toxin superfamily. Potassium channel inhibitor family. Alpha-KTx 01 subfamily. Expressed by the venom gland.

The protein localises to the secreted. Its function is as follows. Potent selective inhibitor of high conductance (maxi-K), different medium and small conductance calcium-activated potassium channels (KCa1.1/KCNMA1 and others), as well as a voltage-dependent potassium channel (Kv1.3/KCNA3&gt;Kv1.2/KCNA2&gt;Kv1.6/KCNA3&gt;&gt;Shaker/Sh). It blocks channel activity by a simple bimolecular inhibition process. Has a pH-specific antimicrobial activity against bacteria (B.subtilis, E.coli and S.aureus) and the fungus C.albicans. In Leiurus hebraeus (Hebrew deathstalker scorpion), this protein is Potassium channel toxin alpha-KTx 1.13.